The following is a 421-amino-acid chain: Cyclin-A1 (421 aa).

The disordered stretch occupies residues 1–21 (MHRQSSKSGVALPPVGQGPDA).

The protein belongs to the cyclin family. Cyclin AB subfamily. In terms of assembly, interacts with INCA1 and KLHDC9. Interacts with the CDK2 and CDC2 protein kinases to form a serine/threonine kinase holoenzyme complex. The cyclin subunit imparts substrate specificity to the complex. Found in a complex with CDK2, CABLES1 and CCNE1. Post-translationally, polyubiquitinated via 'Lys-11'-linked ubiquitin by the anaphase-promoting complex (APC/C), leading to its degradation by the proteasome. Deubiquitinated and stabilized by USP37 enables entry into S phase. Ubiquitinated during the G1 phase by the SCF(FBXO31) complex, leading to its proteasomal degradation. In terms of tissue distribution, testis and ovaries.

The protein resides in the nucleus. It is found in the cytoplasm. It localises to the cytoskeleton. Its subcellular location is the spindle. Functionally, may be involved in the control of the cell cycle at the G1/S (start) and G2/M (mitosis) transitions. May primarily function in the control of the germline meiotic cell cycle and additionally in the control of mitotic cell cycle in some somatic cells. In Mus musculus (Mouse), this protein is Cyclin-A1 (Ccna1).